The sequence spans 185 residues: Probable RNA polymerase sigma-C factor (185 aa).

The Polymerase core binding signature appears at 52–65; it reads DLTQETFLRAIGAI. The H-T-H motif DNA-binding region spans 149-168; the sequence is YADAAAVCGCPVGTIRSRVA.

Belongs to the sigma-70 factor family. ECF subfamily.

In terms of biological role, sigma factors are initiation factors that promote the attachment of RNA polymerase to specific initiation sites and are then released. In Mycobacterium bovis (strain ATCC BAA-935 / AF2122/97), this protein is Probable RNA polymerase sigma-C factor (sigC).